The chain runs to 597 residues: Probable tyrosine-protein phosphatase (597 aa).

Residues 55–81 show a composition bias toward low complexity; that stretch reads VSSSSDAAPTSISTTTTSTTSMTDASA. 3 disordered regions span residues 55–89, 107–172, and 188–228; these read VSSS…QQVY, SFSI…PNSL, and STNG…GNNN. The segment covering 107–126 has biased composition (polar residues); it reads SFSIQPNQTPTMLPTSSYTL. Low complexity predominate over residues 136–151; that stretch reads TSSISSISSTSSNSTS. Composition is skewed to polar residues over residues 188-206 and 216-228; these read STNG…NQPR and KKST…GNNN. A Tyrosine-protein phosphatase domain is found at 428–579; it reads GPKNVLNNLI…LMEFGDKLNN (152 aa). Cysteine 516 serves as the catalytic Phosphocysteine intermediate.

It belongs to the protein-tyrosine phosphatase family. Non-receptor class dual specificity subfamily.

It catalyses the reaction O-phospho-L-tyrosyl-[protein] + H2O = L-tyrosyl-[protein] + phosphate. This chain is Probable tyrosine-protein phosphatase (CPP1), found in Candida albicans (strain WO-1) (Yeast).